A 502-amino-acid chain; its full sequence is RxLR effector protein BLN06 (502 aa).

A signal peptide spans methionine 1–alanine 20. N-linked (GlcNAc...) asparagine glycosylation occurs at asparagine 38. The short motif at leucine 50–arginine 53 is the dEER element.

This sequence belongs to the RxLR effector family.

The protein resides in the secreted. It is found in the host cell membrane. Secreted effector that triggers a robust hypersensitive response (HR) in Lactuca serriola LS102. The response to BLN06 was visible as chlorosis but not as strong necrosis. The protein is RxLR effector protein BLN06 of Bremia lactucae (Lettuce downy mildew).